The sequence spans 570 residues: Sulfite reductase [NADPH] hemoprotein beta-component (570 aa).

Residues Cys-434, Cys-440, Cys-479, and Cys-483 each coordinate [4Fe-4S] cluster. Residue Cys-483 coordinates siroheme.

It belongs to the nitrite and sulfite reductase 4Fe-4S domain family. Alpha(8)-beta(8). The alpha component is a flavoprotein, the beta component is a hemoprotein. Siroheme is required as a cofactor. It depends on [4Fe-4S] cluster as a cofactor.

It catalyses the reaction hydrogen sulfide + 3 NADP(+) + 3 H2O = sulfite + 3 NADPH + 4 H(+). Its pathway is sulfur metabolism; hydrogen sulfide biosynthesis; hydrogen sulfide from sulfite (NADPH route): step 1/1. In terms of biological role, component of the sulfite reductase complex that catalyzes the 6-electron reduction of sulfite to sulfide. This is one of several activities required for the biosynthesis of L-cysteine from sulfate. The chain is Sulfite reductase [NADPH] hemoprotein beta-component from Escherichia coli O9:H4 (strain HS).